Consider the following 265-residue polypeptide: Glutamate racemase (265 aa).

Residues D12–S13 and Y44–G45 each bind substrate. Residue C75 is the Proton donor/acceptor of the active site. Position 76–77 (N76–T77) interacts with substrate. The active-site Proton donor/acceptor is the C183. Residue T184–H185 participates in substrate binding.

The protein belongs to the aspartate/glutamate racemases family.

The enzyme catalyses L-glutamate = D-glutamate. The protein operates within cell wall biogenesis; peptidoglycan biosynthesis. Its function is as follows. Provides the (R)-glutamate required for cell wall biosynthesis. This Carboxydothermus hydrogenoformans (strain ATCC BAA-161 / DSM 6008 / Z-2901) protein is Glutamate racemase.